We begin with the raw amino-acid sequence, 472 residues long: UDP-glycosyltransferase 708G2 (472 aa).

H23 functions as the Proton acceptor in the catalytic mechanism. An anthocyanidin is bound at residue H23. The active-site Charge relay is the D117. A UDP-alpha-D-glucose-binding site is contributed by T140. The tract at residues S283–R284 is UDP. Residues V346, Q348, H363, W366, N367, S368, and E371 each contribute to the UDP-alpha-D-glucose site. G386 is an an anthocyanidin binding site. UDP-alpha-D-glucose-binding residues include D387 and Q388.

The protein belongs to the UDP-glycosyltransferase family. As to expression, expressed at low levels in leaves, flowers and immature leaves.

The enzyme catalyses a 3'-hydro-2'-hydroxy-beta-oxodihydrochalcone + UDP-alpha-D-glucose = a 3'-(beta-D-glucopyranosyl)-2'-hydroxy-beta-oxodihydrochalcone + UDP + H(+). Functionally, UDP-glucose-dependent glucosyltransferase catalyzing the C-glucosylation of 2-hydroxyflavanones (2-hydroxylnaringenin and 2-hydroxypinocembrin) and phloretin. No activity with flavanones, flavones or flavonols. Exhibits C-glucosylation activity toward 2-phenyl-2',4',6'-trihydroxyacetophenone. Can use UDP-xylose as sugar donor, but catalytic efficiency is much lower toward UDP-xylose than toward UDP-glucose. This is UDP-glycosyltransferase 708G2 (UGT708G2) from Citrus unshiu (Satsuma mandarin).